A 126-amino-acid polypeptide reads, in one-letter code: Nucleoside diphosphate kinase B (126 aa).

Residues lysine 6, phenylalanine 37, threonine 68, arginine 79, and asparagine 89 each contribute to the ATP site. Residue histidine 92 is the Pros-phosphohistidine intermediate of the active site.

It belongs to the NDK family. Requires Mg(2+) as cofactor.

It is found in the cytoplasm. It localises to the nucleus. Its subcellular location is the cell projection. The protein resides in the lamellipodium. The protein localises to the ruffle. It carries out the reaction a 2'-deoxyribonucleoside 5'-diphosphate + ATP = a 2'-deoxyribonucleoside 5'-triphosphate + ADP. It catalyses the reaction a ribonucleoside 5'-diphosphate + ATP = a ribonucleoside 5'-triphosphate + ADP. Its function is as follows. Major role in the synthesis of nucleoside triphosphates other than ATP. The chain is Nucleoside diphosphate kinase B (nme2) from Macruronus magellanicus (Patagonian grenadier).